We begin with the raw amino-acid sequence, 161 residues long: Large ribosomal subunit protein uL15 (161 aa).

The segment at 1–50 (MKLSDIADNAGSRKKRMRIGRGIGSGKGKTGGRGGKGQTARSGVRINGFE) is disordered. The span at 21–37 (RGIGSGKGKTGGRGGKG) shows a compositional bias: gly residues.

It belongs to the universal ribosomal protein uL15 family. As to quaternary structure, part of the 50S ribosomal subunit.

Functionally, binds to the 23S rRNA. In Nitrobacter winogradskyi (strain ATCC 25391 / DSM 10237 / CIP 104748 / NCIMB 11846 / Nb-255), this protein is Large ribosomal subunit protein uL15.